We begin with the raw amino-acid sequence, 47 residues long: Protein YtiD (47 aa).

In Escherichia coli (strain K12), this protein is Protein YtiD (ytiD).